We begin with the raw amino-acid sequence, 406 residues long: S-adenosylmethionine synthase (406 aa).

Position 141–146 (141–146 (GQGSMD)) interacts with ATP.

Belongs to the AdoMet synthase 2 family. As to quaternary structure, homodimer. Mg(2+) serves as cofactor.

The enzyme catalyses L-methionine + ATP + H2O = S-adenosyl-L-methionine + phosphate + diphosphate. The protein operates within amino-acid biosynthesis; S-adenosyl-L-methionine biosynthesis; S-adenosyl-L-methionine from L-methionine: step 1/1. Catalyzes the formation of S-adenosylmethionine from methionine and ATP. This Methanocaldococcus jannaschii (strain ATCC 43067 / DSM 2661 / JAL-1 / JCM 10045 / NBRC 100440) (Methanococcus jannaschii) protein is S-adenosylmethionine synthase (mat).